A 291-amino-acid polypeptide reads, in one-letter code: MKISITAPAKINLSLDALYKRDDGYHEVEMVMTTIDLADRLYLERLDEDKIVLDVKAHFIPEDRRNLIYQAALLLKKRFDVKMGVRITIDKHIPVSAGLAGGSSDAAAALKGLNIIWELGLSIEELAEISSEIGSDIAFCVYGGTALATGRGEKISALPNMPGCWIVLAKPSISVSTPTIYKELQVESVEHPDTKKMIESIKNGDLDGIFASTGNVLESVTLEKNPQVKRIKDRMLAFGAEAALMSGSGPTVFALIKQYSRAKRVYNGLRGFCEEVYMVRPWSEGENDTNK.

The active site involves Lys10. 94–104 contributes to the ATP binding site; that stretch reads PVSAGLAGGSS. Asp136 is an active-site residue.

It belongs to the GHMP kinase family. IspE subfamily.

The catalysed reaction is 4-CDP-2-C-methyl-D-erythritol + ATP = 4-CDP-2-C-methyl-D-erythritol 2-phosphate + ADP + H(+). It participates in isoprenoid biosynthesis; isopentenyl diphosphate biosynthesis via DXP pathway; isopentenyl diphosphate from 1-deoxy-D-xylulose 5-phosphate: step 3/6. Catalyzes the phosphorylation of the position 2 hydroxy group of 4-diphosphocytidyl-2C-methyl-D-erythritol. This Listeria monocytogenes serotype 4a (strain HCC23) protein is 4-diphosphocytidyl-2-C-methyl-D-erythritol kinase.